The chain runs to 459 residues: Argininosuccinate lyase (459 aa).

This sequence belongs to the lyase 1 family. Argininosuccinate lyase subfamily.

Its subcellular location is the cytoplasm. It carries out the reaction 2-(N(omega)-L-arginino)succinate = fumarate + L-arginine. It participates in amino-acid biosynthesis; L-arginine biosynthesis; L-arginine from L-ornithine and carbamoyl phosphate: step 3/3. The sequence is that of Argininosuccinate lyase from Prochlorococcus marinus (strain AS9601).